Reading from the N-terminus, the 348-residue chain is Phenylalanine--tRNA ligase alpha subunit (348 aa).

Residue Glu-269 participates in Mg(2+) binding.

The protein belongs to the class-II aminoacyl-tRNA synthetase family. Phe-tRNA synthetase alpha subunit type 1 subfamily. Tetramer of two alpha and two beta subunits. It depends on Mg(2+) as a cofactor.

Its subcellular location is the cytoplasm. It catalyses the reaction tRNA(Phe) + L-phenylalanine + ATP = L-phenylalanyl-tRNA(Phe) + AMP + diphosphate + H(+). The sequence is that of Phenylalanine--tRNA ligase alpha subunit from Dechloromonas aromatica (strain RCB).